A 463-amino-acid chain; its full sequence is Serine/threonine-protein kinase tricornered (463 aa).

The region spanning 93 to 394 (FEALKVIGRG…LEDLKSVPFF (302 aa)) is the Protein kinase domain. ATP is bound by residues 99–107 (IGRGAFGEV) and K122. Positions 119-180 (YAMKVLRKAD…EFLPGGDMMT (62 aa)) are interaction with mats and Mob1. The Proton acceptor role is filled by D216. S292 is subject to Phosphoserine. Residues 395-463 (RGVDWEHIRE…YKRFEVRNLE (69 aa)) enclose the AGC-kinase C-terminal domain. T453 carries the phosphothreonine modification.

This sequence belongs to the protein kinase superfamily. AGC Ser/Thr protein kinase family. As to quaternary structure, interacts with, and is activated by, Mob1. Mg(2+) serves as cofactor. As to expression, expressed in the peripheral and central nervous system (at protein level). Expressed in the wing imaginal disk.

Its subcellular location is the cytoplasm. It is found in the nucleus. The enzyme catalyses L-seryl-[protein] + ATP = O-phospho-L-seryl-[protein] + ADP + H(+). It catalyses the reaction L-threonyl-[protein] + ATP = O-phospho-L-threonyl-[protein] + ADP + H(+). Activated by fry. Functionally, serine/threonine-protein kinase involved in controlling cell structure and proliferation of a variety of polarized outgrowths including epidermal hairs, bristles, arista laterals, and dendrites. Together with fry, maintains the integrity of epidermal hairs and is an essential component of the signaling pathway regulating dendritic branching of sensory neurons. Reduces neurite outgrowth by phosphorylating pav, thereby inhibiting its function in microtubule-microtubule sliding. The protein is Serine/threonine-protein kinase tricornered of Drosophila melanogaster (Fruit fly).